An 870-amino-acid chain; its full sequence is Endoribonuclease YSH1 (870 aa).

Zn(2+)-binding residues include histidine 159, histidine 161, aspartate 163, histidine 164, histidine 256, and aspartate 277. Catalysis depends on histidine 499, which acts as the Proton donor. Histidine 521 is a Zn(2+) binding site. The tract at residues 598 to 627 (ITELTEEKEEADEIKEDNGETDTTQKPNES) is disordered. Acidic residues predominate over residues 601–612 (LTEEKEEADEIK). Polar residues predominate over residues 618–627 (TDTTQKPNES).

Belongs to the metallo-beta-lactamase superfamily. RNA-metabolizing metallo-beta-lactamase-like family. CPSF2/YSH1 subfamily.

Its subcellular location is the nucleus. Component of the cleavage factor I (CF I) involved in pre-mRNA 3'-end processing. In Candida albicans (strain SC5314 / ATCC MYA-2876) (Yeast), this protein is Endoribonuclease YSH1 (YSH1).